Reading from the N-terminus, the 231-residue chain is 7-cyano-7-deazaguanine synthase (231 aa).

8–18 (FSGGQDSTTCL) is an ATP binding site. Residues C188, C197, C200, and C203 each coordinate Zn(2+).

The protein belongs to the QueC family. It depends on Zn(2+) as a cofactor.

The enzyme catalyses 7-carboxy-7-deazaguanine + NH4(+) + ATP = 7-cyano-7-deazaguanine + ADP + phosphate + H2O + H(+). The protein operates within purine metabolism; 7-cyano-7-deazaguanine biosynthesis. Its function is as follows. Catalyzes the ATP-dependent conversion of 7-carboxy-7-deazaguanine (CDG) to 7-cyano-7-deazaguanine (preQ(0)). In Escherichia coli (strain SMS-3-5 / SECEC), this protein is 7-cyano-7-deazaguanine synthase.